A 1758-amino-acid polypeptide reads, in one-letter code: MSNINEKDLSEFLESNLRSLNDIDDAVATSSAECNYEDYEEFTNSVDLTFFEQDLSGVLKELKKLAESVVISGKKCDIRNIFEESDVATMKFNLFVWYFLENGQRSDSSEEDVDKGVSAASSYIAMCSLPGAISDLYQIGLYNQCLKIIRNCCHTVRIGETVVTKKSSGAKKKKAGGKSDETNVDGEMTVTTGAADPIIGPPRIAVDSAERYLHHLTTQLFAFLHSNTFSIDTPTLMSTLEVVEDIGRLDLDNRTAGRAIRANSVHEFRSLERFTDRYCAFVHSLVESKYKTRAEVAYGRLIRPRLALMPYPDESNKSSKISTERKRSGELHVNLILSRISRNPEARELKYIQTVTVMVYSQCPDLAEFRTNIATFIHKILEALPYTYTYDFVQFMNVLFKGRGAGVKSLSTELSSILISSFDFTAPDPGAIPNLDAEQNEEEDEEEEGEDEEEEEENEQDDVAVKEEEQSDKSDEENDGDNEENVSKKKEEKKKEKKAKEVKEVGRMDAMSVLYNIVYMACLDKAAAMRLHGANSLTKILQSQSHREAFQLFCATINAEMDEKFGAVGDNLSESLEDLNVSGKAPSSKTKKPTDLLLDEQQIIQKFNKLKLMNKGETRVEKDIVYMIVRRLSTDDKAPVKKAACSLLKSYLSYCDEASKFEVVLSILQMLCRDRMVSVRKTGADAFTELMLRDAILFKESLSSKWLHTLISMLNDTDNDVTEHARKLIMKVLTPLLENSSDLTWTLLDTIESVTNHRQYLMSTLKDAVREKLVKRTVMDSMKQHIISGSEKLDGAWMVFSQLCVQFEQNVDFAIETFSRVDLSRESNLVQYMIHVIENNIKKIDDDTKSDLVNTLQGTFRDYCLHPSHSRSIYHCLGKLMDGIGDRSLHGKEFSDFGETLLIKCFDTIVQSFEMFKDKDEWKRNSESQERLLCTALNVASEVFSYSPQLVPRHERLGKTLSLIVNSTENGSSDASTVNPDMPSVHHTRPPTQLSEVPSSQKSSKGGMMSHEGAMFSDKVRAVGVVTLANMILAHDRLLKLMPMLVKQLQYNTAHQIRSNIVLAIGDICSSYKTDRYAPMLAASLCDPSVIVRRHAINQIARLISFGIFRFNGEIMIRMMLASLDANEDVRNDAKLYISEVLQSEEPNFFPLNFVQYMIALTQARRLVGVGHDEDDRGQVDVAIGGGDPLARPSRIAIYTFMIDSLDDRSRFDVKMSICQRIFTPIVNGEYDFSDYNVQCLLDDALLIMASNEMQVKMDVGKNPNENAMDDPSPEVLEAATGFMQKVYLDHYMKTIVPSILSLREFLNQHRSPLQRKCLLAIRMICIEHKNDIDEILQDNRQLKDEMMFELQRVKQRTEEANRILDEYLKRVAEFKKQQKRLSKSPAPMELDAEPVQESAEAVEMGSPARRIEEDQENVEEEVEMRTPQKKNPDADVPRTPLNALRSTTEEKSTPNARLLSPKTIKKIRRSLGALIHTEMRLNPPNLEETKIDDTTINRSKQADKTEEKTIVEEEPMEEAAAEKTVTAENDHVDAEKTVIAVEIPPATEAEEDEVVDVQSESRRSRRRKTPNYDDEESVDADGKIWKKPKIVNKSPEKEVNISANVTLRRSRRGQSTEPPVVKENSNRKRKSVDEEEENVPTSSSGNTENDPLSRGVTPLIFDESKLGAGRHCSTPIRSREDADPSDVTFSLNLSAITEKEDLKNRSKKVKLITFTISSKRMKRKADQCHCINLPSKFVLFISTVCIIVRLSAVFSLN.

4 disordered regions span residues D428–E501, E969–M1008, Q1379–L1460, and S1500–G1656. Residues E438–D462 are compositionally biased toward acidic residues. Residues V463–K473 show a composition bias toward basic and acidic residues. Positions S474–E484 are enriched in acidic residues. The segment covering N485 to E501 has biased composition (basic and acidic residues). The segment covering E969–N979 has biased composition (polar residues). Residues S999–M1008 show a composition bias toward low complexity. A coiled-coil region spans residues C1326–S1385. Residues E1414–V1423 are compositionally biased toward acidic residues. Basic and acidic residues-rich tracts occupy residues E1424–V1437 and S1500–V1512. Polar residues-rich tracts occupy residues I1602–E1618 and V1640–D1651.

In terms of assembly, component of the condensin-2 complex.

Its subcellular location is the nucleus. It localises to the chromosome. It is found in the centromere. In terms of biological role, chromosomal protein which is recruited to mitotic chromosomes by hcp-3 (CENP-A) and hcp-4 (CENP-C). Involved in chromosome segregation during mitosis, playing a role in chromosome condensation and in maintaining chromosome morphology, rigidity and orientation during mitosis. This is Condensin-2 complex subunit hcp-6 from Caenorhabditis elegans.